The chain runs to 308 residues: Methionyl-tRNA formyltransferase (308 aa).

109–112 lines the (6S)-5,6,7,8-tetrahydrofolate pocket; it reads SLLP.

Belongs to the Fmt family.

The enzyme catalyses L-methionyl-tRNA(fMet) + (6R)-10-formyltetrahydrofolate = N-formyl-L-methionyl-tRNA(fMet) + (6S)-5,6,7,8-tetrahydrofolate + H(+). Its function is as follows. Attaches a formyl group to the free amino group of methionyl-tRNA(fMet). The formyl group appears to play a dual role in the initiator identity of N-formylmethionyl-tRNA by promoting its recognition by IF2 and preventing the misappropriation of this tRNA by the elongation apparatus. This Methylococcus capsulatus (strain ATCC 33009 / NCIMB 11132 / Bath) protein is Methionyl-tRNA formyltransferase.